A 679-amino-acid polypeptide reads, in one-letter code: Protein polyglycylase TTLL10 (679 aa).

Over residues Met-1 to Arg-15 the composition is skewed to basic residues. Disordered stretches follow at residues Met-1–Ser-33, Gly-49–Ala-77, and Val-96–Ser-124. Residues Ser-18–Gly-30 show a composition bias toward polar residues. Residues Val-96–His-110 are compositionally biased toward basic residues. One can recognise a TTL domain in the interval Gln-172–Lys-543. ATP is bound by residues Lys-304, Gln-310–Gly-311, Gln-353–Val-356, Lys-366–Asp-368, and Thr-409–Asn-410. Gln-310 contacts a protein. Asp-489, Glu-502, and Asn-504 together coordinate Mg(2+). The tract at residues Asp-605–Ser-679 is disordered.

It depends on Mg(2+) as a cofactor.

The protein localises to the cytoplasm. It is found in the cytoskeleton. Its subcellular location is the cell projection. The protein resides in the cilium. It localises to the cilium axoneme. It carries out the reaction (glycyl)(n)-glycyl-L-glutamyl-[protein] + glycine + ATP = (glycyl)(n+1)-glycyl-L-glutamyl-[protein] + ADP + phosphate + H(+). Polyglycylase which modifies both tubulin and non-tubulin proteins, generating polyglycine side chains of variable lengths on the gamma-carboxyl groups of specific glutamate residues of target proteins. Involved in the elongation step rather than the initiation step of the polyglycylation reaction. Polyglycylates alpha-tubulin and beta-tubulin. Polyglycylates non-tubulin proteins such as nucleosome assembly protein NAP1. This is Protein polyglycylase TTLL10 from Rattus norvegicus (Rat).